The chain runs to 490 residues: Adenylosuccinate synthetase, chloroplastic (490 aa).

A chloroplast-targeting transit peptide spans 1–45; the sequence is MSLSSLTLDSNPRFAVGGPYHRRYPPLHHPRSFVSCSAKRPAVSA. S46 is subject to N-acetylserine. GTP-binding positions include 77–83 and 105–107; these read GDEGKGK and GHT. The active-site Proton acceptor is D78. Mg(2+)-binding residues include D78 and G105. IMP-binding positions include 78-81, 103-106, T195, R209, Q289, T304, and R368; these read DEGK and NAGH. The active-site Proton donor is H106. Residue 364-370 coordinates substrate; it reads TTTGRPR. GTP is bound by residues R370, 396–398, and 479–481; these read KLD and GIG.

It belongs to the adenylosuccinate synthetase family. In terms of assembly, homodimer. It depends on Mg(2+) as a cofactor.

It localises to the plastid. It is found in the chloroplast. It carries out the reaction IMP + L-aspartate + GTP = N(6)-(1,2-dicarboxyethyl)-AMP + GDP + phosphate + 2 H(+). It functions in the pathway purine metabolism; AMP biosynthesis via de novo pathway; AMP from IMP: step 1/2. Plays an important role in the de novo pathway and in the salvage pathway of purine nucleotide biosynthesis. Catalyzes the first committed step in the biosynthesis of AMP from IMP. This is Adenylosuccinate synthetase, chloroplastic from Arabidopsis thaliana (Mouse-ear cress).